The following is a 319-amino-acid chain: Acetyl esterase (319 aa).

The Involved in the stabilization of the negatively charged intermediate by the formation of the oxyanion hole signature appears at 91 to 93 (HGG). Active-site residues include Ser-165, Asp-262, and His-292.

This sequence belongs to the 'GDXG' lipolytic enzyme family. As to quaternary structure, homodimer. Interacts with MalT and MelA.

The protein localises to the cytoplasm. Functionally, displays esterase activity towards short chain fatty esters (acyl chain length of up to 8 carbons). Able to hydrolyze triacetylglycerol (triacetin) and tributyrylglycerol (tributyrin), but not trioleylglycerol (triolein) or cholesterol oleate. Negatively regulates MalT activity by antagonizing maltotriose binding. Inhibits MelA galactosidase activity. This chain is Acetyl esterase, found in Shigella boydii serotype 18 (strain CDC 3083-94 / BS512).